The chain runs to 267 residues: NAD kinase 2 (267 aa).

D52 acts as the Proton acceptor in catalysis. Residues 52 to 53 (DG), 124 to 125 (NE), R151, D153, 164 to 169 (TAYNKS), and A188 contribute to the NAD(+) site.

The protein belongs to the NAD kinase family. A divalent metal cation serves as cofactor.

It is found in the cytoplasm. It carries out the reaction NAD(+) + ATP = ADP + NADP(+) + H(+). Involved in the regulation of the intracellular balance of NAD and NADP, and is a key enzyme in the biosynthesis of NADP. Catalyzes specifically the phosphorylation on 2'-hydroxyl of the adenosine moiety of NAD to yield NADP. This is NAD kinase 2 from Bacillus subtilis (strain 168).